The chain runs to 552 residues: CTP synthase (552 aa).

Residues 1 to 265 (MTKFVFVTGG…DRIVCEKLAL (265 aa)) are amidoligase domain. Serine 13 provides a ligand contact to CTP. Serine 13 is a binding site for UTP. Residues 14 to 19 (SLGKGI) and aspartate 71 contribute to the ATP site. 2 residues coordinate Mg(2+): aspartate 71 and glutamate 139. CTP-binding positions include 146–148 (DIE), 186–191 (KTKPTQ), and lysine 222. Residues 186–191 (KTKPTQ) and lysine 222 each bind UTP. Residues 290–545 (TIGMVGKYVD…IKAALAHKQA (256 aa)) enclose the Glutamine amidotransferase type-1 domain. Residue glycine 351 coordinates L-glutamine. The active-site Nucleophile; for glutamine hydrolysis is the cysteine 378. L-glutamine contacts are provided by residues 379–382 (LGMQ), glutamate 402, and arginine 468. Catalysis depends on residues histidine 518 and glutamate 520.

This sequence belongs to the CTP synthase family. As to quaternary structure, homotetramer.

The catalysed reaction is UTP + L-glutamine + ATP + H2O = CTP + L-glutamate + ADP + phosphate + 2 H(+). The enzyme catalyses L-glutamine + H2O = L-glutamate + NH4(+). It carries out the reaction UTP + NH4(+) + ATP = CTP + ADP + phosphate + 2 H(+). Its pathway is pyrimidine metabolism; CTP biosynthesis via de novo pathway; CTP from UDP: step 2/2. Allosterically activated by GTP, when glutamine is the substrate; GTP has no effect on the reaction when ammonia is the substrate. The allosteric effector GTP functions by stabilizing the protein conformation that binds the tetrahedral intermediate(s) formed during glutamine hydrolysis. Inhibited by the product CTP, via allosteric rather than competitive inhibition. Functionally, catalyzes the ATP-dependent amination of UTP to CTP with either L-glutamine or ammonia as the source of nitrogen. Regulates intracellular CTP levels through interactions with the four ribonucleotide triphosphates. The protein is CTP synthase of Herminiimonas arsenicoxydans.